A 187-amino-acid polypeptide reads, in one-letter code: Transcriptional repressor NrdR (187 aa).

Positions 1–21 are disordered; it reads MQCPYCQHTNSRVLESRSSEG. A zinc finger lies at 3-34; sequence CPYCQHTNSRVLESRSSEGGQSIRRRRECLNC. The ATP-cone domain occupies 49–139; that stretch reads ITVIKHDGKK…VYGRFKGIKD (91 aa). 2 stretches are compositionally biased toward polar residues: residues 152-162 and 170-187; these read ISSPMSQWSKS and SQTS…ENSR. A disordered region spans residues 152-187; the sequence is ISSPMSQWSKSSTRDRDQSQTSPCLSLTHNGSENSR.

It belongs to the NrdR family. Zn(2+) serves as cofactor.

In terms of biological role, negatively regulates transcription of bacterial ribonucleotide reductase nrd genes and operons by binding to NrdR-boxes. In Crocosphaera subtropica (strain ATCC 51142 / BH68) (Cyanothece sp. (strain ATCC 51142)), this protein is Transcriptional repressor NrdR.